The following is a 212-amino-acid chain: Large ribosomal subunit protein uL3 (212 aa).

Gln-153 bears the N5-methylglutamine mark.

Belongs to the universal ribosomal protein uL3 family. Part of the 50S ribosomal subunit. Forms a cluster with proteins L14 and L19. Post-translationally, methylated by PrmB.

Functionally, one of the primary rRNA binding proteins, it binds directly near the 3'-end of the 23S rRNA, where it nucleates assembly of the 50S subunit. The chain is Large ribosomal subunit protein uL3 from Shewanella piezotolerans (strain WP3 / JCM 13877).